A 231-amino-acid chain; its full sequence is Cytochrome b-c1 complex subunit Rieske, mitochondrial (231 aa).

A mitochondrion-targeting transit peptide spans 1–24 (MAPVSIVSRAAMRAAAAPARAVRA). Positions 25–32 (LTTSTALQ) are cleaved as a propeptide — removed in mature form. Residues 33–65 (GSSSSTFESPFKGESKAAKVPDFGKYMSKAPPS) are Mitochondrial matrix-facing. A helical transmembrane segment spans residues 66 to 95 (TNMLFSYFMVGTMGAITAAGAKSTIQEFLK). Residues 96-231 (NMSASADVLA…FPEEGKLVIG (136 aa)) are Mitochondrial intermembrane-facing. In terms of domain architecture, Rieske spans 134 to 229 (RHRTPAEIEE…YEFPEEGKLV (96 aa)). 4 residues coordinate [2Fe-2S] cluster: Cys174, His176, Cys193, and His196. The cysteines at positions 179 and 195 are disulfide-linked.

It belongs to the Rieske iron-sulfur protein family. As to quaternary structure, component of the ubiquinol-cytochrome c oxidoreductase (cytochrome b-c1 complex, complex III, CIII), a multisubunit enzyme composed of 10 subunits. The complex is composed of 3 respiratory subunits cytochrome b (cob), cytochrome c1 (cyt-1) and Rieske protein (fes-1), 2 core protein subunits pep and ucr-1, and 5 low-molecular weight protein subunits qcr6, qcr7, qcr8, qcr9 and probably NCU16844/qcr10. The complex exists as an obligatory dimer and forms supercomplexes (SCs) in the inner mitochondrial membrane with NADH-ubiquinone oxidoreductase (complex I, CI) and cytochrome c oxidase (complex IV, CIV), resulting in different assemblies (supercomplexes SCI(1)III(2), SCIII(2)IV(1) and SCIII(2)IV(2) as well as higher order I(x)III(y)IV(z) megacomplexes). It depends on [2Fe-2S] cluster as a cofactor. In terms of processing, processed by both the mitochondrial processing peptidase (MPP) and the mitochondrial intermediate protease (MIP). Initially, MPP removes 25 amino acids from the newly imported precursor in the mitochondrial matrix. This proteolytic processing is then followed by a second proteolytic cleavage by MIP, which removes an octapeptide to generate mature-sized Rieske protein.

It is found in the mitochondrion inner membrane. The catalysed reaction is a quinol + 2 Fe(III)-[cytochrome c](out) = a quinone + 2 Fe(II)-[cytochrome c](out) + 2 H(+)(out). Its function is as follows. Component of the ubiquinol-cytochrome c oxidoreductase, a multisubunit transmembrane complex that is part of the mitochondrial electron transport chain which drives oxidative phosphorylation. The respiratory chain contains 3 multisubunit complexes succinate dehydrogenase (complex II, CII), ubiquinol-cytochrome c oxidoreductase (cytochrome b-c1 complex, complex III, CIII) and cytochrome c oxidase (complex IV, CIV), that cooperate to transfer electrons derived from NADH and succinate to molecular oxygen, creating an electrochemical gradient over the inner membrane that drives transmembrane transport and the ATP synthase. The cytochrome b-c1 complex catalyzes electron transfer from ubiquinol to cytochrome c, linking this redox reaction to translocation of protons across the mitochondrial inner membrane, with protons being carried across the membrane as hydrogens on the quinol. In the process called Q cycle, 2 protons are consumed from the matrix, 4 protons are released into the intermembrane space and 2 electrons are passed to cytochrome c. The Rieske protein is a catalytic core subunit containing a [2Fe-2S] iron-sulfur cluster. It cycles between 2 conformational states during catalysis to transfer electrons from the quinol bound in the Q(0) site in cytochrome b to cytochrome c1. The polypeptide is Cytochrome b-c1 complex subunit Rieske, mitochondrial (fes-1) (Neurospora crassa (strain ATCC 24698 / 74-OR23-1A / CBS 708.71 / DSM 1257 / FGSC 987)).